The following is a 60-amino-acid chain: Toxin 5 (60 aa).

Intrachain disulfides connect C3-C22, C17-C39, C41-C52, and C53-C58.

This sequence belongs to the three-finger toxin family. Short-chain subfamily. Type I alpha-neurotoxin sub-subfamily. In terms of tissue distribution, expressed by the venom gland.

It localises to the secreted. Functionally, binds to muscle nicotinic acetylcholine receptor (nAChR) and inhibit acetylcholine from binding to the receptor, thereby impairing neuromuscular transmission. The sequence is that of Toxin 5 from Hydrophis schistosus (Beaked sea snake).